A 247-amino-acid polypeptide reads, in one-letter code: MSGKDRIEIFPSRMAQTIMKARLKGAQTGRNLLKKKSDALTLRFRQILKKIIETKMLMGEVMREAAFSLAEAKFTAGDFSTTVIQNVNKAQVKIRAKKDNVAGVTLPVFEHYHEGTDSYELTGLARGGEQLAKLKRNYAKAVELLVELASLQTSFVTLDEAIKITNRRVNRIEHVIIPRIERTLAYIITELDEREREEFYRLKKIQEKKKILKEKSDKDLEQRRAAGEVIEPANLLAEEKDEDLLFE.

Belongs to the V-ATPase D subunit family. In terms of assembly, V-ATPase is a heteromultimeric enzyme made up of two complexes: the ATP-hydrolytic V1 complex and the proton translocation V0 complex. The V1 complex consists of three catalytic AB heterodimers that form a heterohexamer, three peripheral stalks each consisting of EG heterodimers, one central rotor including subunits D and F, and the regulatory subunits C and H. The proton translocation complex V0 consists of the proton transport subunit a, a ring of proteolipid subunits c9c'', rotary subunit d, subunits e and f, and the accessory subunits ATP6AP1/Ac45 and ATP6AP2/PRR. Interacts with SNX10. Expressed in brain (at protein level). Present in tissues active in secretion. Amounts elevated in brain, kidney and testis.

It is found in the membrane. The protein resides in the cytoplasmic vesicle. Its subcellular location is the clathrin-coated vesicle membrane. The protein localises to the cytoplasm. It localises to the cytoskeleton. It is found in the microtubule organizing center. The protein resides in the centrosome. Its subcellular location is the cell projection. The protein localises to the cilium. Subunit of the V1 complex of vacuolar(H+)-ATPase (V-ATPase), a multisubunit enzyme composed of a peripheral complex (V1) that hydrolyzes ATP and a membrane integral complex (V0) that translocates protons. V-ATPase is responsible for acidifying and maintaining the pH of intracellular compartments and in some cell types, is targeted to the plasma membrane, where it is responsible for acidifying the extracellular environment. May play a role in cilium biogenesis through regulation of the transport and the localization of proteins to the cilium. The sequence is that of V-type proton ATPase subunit D (ATP6V1D) from Bos taurus (Bovine).